Here is a 284-residue protein sequence, read N- to C-terminus: Trimeric intracellular cation channel type B-B (284 aa).

Over 1–15 the chain is Lumenal; the sequence is MESLSEVSVQFSQLS. A helical transmembrane segment spans residues 16–32; it reads MFPFFDMAHYLASVMSA. Residues 33–44 are Cytoplasmic-facing; that stretch reads REQAGALDIASH. A helical transmembrane segment spans residues 45–68; it reads SPMASWFSAMLHCFGGGILSSILL. Over 69-79 the chain is Lumenal; it reads AEPPVGILANT. The helical transmembrane segment at 80-99 threads the bilayer; it reads TNIMLASAIWYMVYYFPYDL. Over 100–102 the chain is Cytoplasmic; the sequence is FYN. A helical transmembrane segment spans residues 103 to 121; that stretch reads CFFFLPIRLIAAGMKEVTR. A 1,2-diacyl-sn-glycero-3-phospho-(1D-myo-inositol-4,5-bisphosphate)-binding residues include K117 and R121. Residues 122–139 are Lumenal-facing; the sequence is TWKILSGITHAHSHYKDA. A helical membrane pass occupies residues 140 to 157; sequence WLVMITIGWARGAGGGLI. The Cytoplasmic portion of the chain corresponds to 158-178; it reads SNFEQLVRGVWKPESNEFLKM. The helical transmembrane segment at 179 to 196 threads the bilayer; that stretch reads SYPVKVTLIGAVLFTLQH. Topologically, residues 197–204 are lumenal; it reads GHYLPISR. The helical transmembrane segment at 205–225 threads the bilayer; that stretch reads HNLMFIYTMFLVSIKVTMMLT. Residues 226–284 are Cytoplasmic-facing; sequence HSAGSPFLPLETPLHRILFGLRQNQAEVRESPSSSGAKGKPSKKTLDKDSGEQSNKKDK. The disordered stretch occupies residues 250–284; it reads QAEVRESPSSSGAKGKPSKKTLDKDSGEQSNKKDK. A compositionally biased stretch (basic and acidic residues) spans 269 to 284; the sequence is KTLDKDSGEQSNKKDK.

It belongs to the TMEM38 family. Homotrimer; conformation seems to be controled by binding to diacylglycerol (DAG).

It is found in the endoplasmic reticulum membrane. It catalyses the reaction K(+)(in) = K(+)(out). Channel activity is activated by increased cytosolic Ca(2+) levels and blocked by luminal high Ca(2+) levels. Intracellular monovalent cation channel required for maintenance of rapid intracellular calcium release. Acts as a potassium counter-ion channel that functions in synchronization with calcium release from intracellular stores. Activated by increased cytosolic Ca(2+) levels. The polypeptide is Trimeric intracellular cation channel type B-B (tmem38b-b) (Xenopus laevis (African clawed frog)).